Reading from the N-terminus, the 617-residue chain is KIF-binding protein (617 aa).

Residues 48–83 (ALLGPAPEDEDEPAADDGPGDQALGAGEPREAEGPG) form a disordered region. The span at 54 to 66 (PEDEDEPAADDGP) shows a compositional bias: acidic residues. Residue serine 174 is modified to Phosphoserine.

This sequence belongs to the KIF-binding protein family. In terms of assembly, interacts with KIF1B; positively regulates KIF1B microtubule motor activity. Interacts with STMN2. In terms of tissue distribution, in the embryo it is expressed in cortical neurons; expression increases during neuronal development.

The protein localises to the cytoplasm. The protein resides in the cytoskeleton. In terms of biological role, activator of KIF1B plus-end-directed microtubule motor activity. Required for organization of axonal microtubules, and axonal outgrowth and maintenance during peripheral and central nervous system development. This Mus musculus (Mouse) protein is KIF-binding protein.